Reading from the N-terminus, the 78-residue chain is MAREIKDIKEFVELARRSDIKSAIVKVNAKVNANGKKFKQTKFKVRGSRYQYTLVVNDASKAKKLQQSLPPTLKITNL.

The protein belongs to the eukaryotic ribosomal protein eL38 family. In terms of assembly, component of the large ribosomal subunit. Mature ribosomes consist of a small (40S) and a large (60S) subunit. The 40S subunit contains about 32 different proteins and 1 molecule of RNA (18S). The 60S subunit contains 45 different proteins and 3 molecules of RNA (25S, 5.8S and 5S).

It is found in the cytoplasm. Its function is as follows. Component of the ribosome, a large ribonucleoprotein complex responsible for the synthesis of proteins in the cell. The small ribosomal subunit (SSU) binds messenger RNAs (mRNAs) and translates the encoded message by selecting cognate aminoacyl-transfer RNA (tRNA) molecules. The large subunit (LSU) contains the ribosomal catalytic site termed the peptidyl transferase center (PTC), which catalyzes the formation of peptide bonds, thereby polymerizing the amino acids delivered by tRNAs into a polypeptide chain. The nascent polypeptides leave the ribosome through a tunnel in the LSU and interact with protein factors that function in enzymatic processing, targeting, and the membrane insertion of nascent chains at the exit of the ribosomal tunnel. The sequence is that of Large ribosomal subunit protein eL38 from Candida albicans (strain SC5314 / ATCC MYA-2876) (Yeast).